The following is a 30-amino-acid chain: Trypsin inhibitor 4 (30 aa).

Intrachain disulfides connect cysteine 3–cysteine 20, cysteine 10–cysteine 22, and cysteine 16–cysteine 29.

It belongs to the protease inhibitor I7 (squash-type serine protease inhibitor) family.

It localises to the secreted. Its function is as follows. Inhibits trypsin. The polypeptide is Trypsin inhibitor 4 (Cucumis sativus (Cucumber)).